Reading from the N-terminus, the 470-residue chain is Uronate isomerase (470 aa).

Belongs to the metallo-dependent hydrolases superfamily. Uronate isomerase family.

It carries out the reaction D-glucuronate = D-fructuronate. The catalysed reaction is aldehydo-D-galacturonate = keto-D-tagaturonate. Its pathway is carbohydrate metabolism; pentose and glucuronate interconversion. This is Uronate isomerase from Salmonella typhi.